A 59-amino-acid chain; its full sequence is Small ribosomal subunit protein bS21 (59 aa).

A disordered region spans residues 35 to 59 (REHYEKPSVKKKKKSEAAKRKKRNF). Over residues 43–59 (VKKKKKSEAAKRKKRNF) the composition is skewed to basic residues.

The protein belongs to the bacterial ribosomal protein bS21 family.

The polypeptide is Small ribosomal subunit protein bS21 (Finegoldia magna (strain ATCC 29328 / DSM 20472 / WAL 2508) (Peptostreptococcus magnus)).